We begin with the raw amino-acid sequence, 565 residues long: Perivitellin-2 67 kDa subunit (565 aa).

The signal sequence occupies residues 1 to 26; that stretch reads MSQLRWWVVSQLLLLIVVCILDHSEG. Positions 27–340 constitute an MACPF domain; it reads ARVCPKIVPG…AKVANLDRLT (314 aa).

As to quaternary structure, perivitellin-2 is a heterooctamer of 4 identical 98 kDa heterodimers, each composed of one 31 kDa and one 67 kDa subunits. The 98 kDa heterodimer subunits are held together by disulfide bridges while the heterodimers are assembled into the native perivitellin-2 octamer by non-covalent forces. In terms of processing, glycosylated. Contains four O-linked and one N-linked oligosaccharide bonds. The protein contains 2.5% of carbohydrates (high levels of mannose, galactose, and NAcGlucosamine, and small amounts of NacGalactosamine). PV2 is a very high density lipoprotein (VHDL). It contains 3.75% of lipids. The major lipid classes are free sterols and phospholipids and also have significant quantities of energy-providing triacylglycerides and free fatty acids. As to expression, produced by albumen secretory cells. Found in developing eggs.

The protein resides in the secreted. Its subcellular location is the target cell membrane. Functionally, the egg defensive protein perivitellin-2 is a pore-forming two-subunit glycoprotein that affects both the nervous and digestive systems of mammals. In addition, it is a source of both structural and energetic molecules during embryonic development. The tachylectin subunit (31 kDa) binds target membranes while the MACPF subunit (67 kDa) disrupts lipid bilayers forming large pores altering the plasma membrance conductance. Both in vivo and in vitro, the protein shows wide pH range stability and is resistant to enzymatic proteolysis from gastrointestinal environments. It specifically binds mature enterocytes but does not cause cell disruption on caco-2 (human colorectal adenocarcinoma cells) or rat intestinal cells. After oral administration to mice, it binds enterocytes and induces large dose-dependent morphological changes on their small intestine mucosa, reducing the absorptive surface. Additionally, it is detected in the Peyer's patches where it activates lymphoid follicles and triggers apoptosis. The toxin can also traverse the intestinal barrier and induce oral adaptive immunity with evidence of circulating antibody response. The toxin also shows hemagglutination properties thanks to the tachylectin subunit, but does not show hemolytic activity. In addition to enterotoxin activity, the toxin also acts as a neurotoxin, since an intraperitoneal injection induces paralysis of the mice rear limbs, followed by death. This chain is Perivitellin-2 67 kDa subunit, found in Pomacea canaliculata (Golden apple snail).